Reading from the N-terminus, the 452-residue chain is Cobyrinate a,c-diamide synthase (452 aa).

The 194-residue stretch at R248–A441 folds into the GATase cobBQ-type domain. Residue C330 is the Nucleophile of the active site.

Belongs to the CobB/CbiA family. The cofactor is Mg(2+).

The enzyme catalyses cob(II)yrinate + 2 L-glutamine + 2 ATP + 2 H2O = cob(II)yrinate a,c diamide + 2 L-glutamate + 2 ADP + 2 phosphate + 2 H(+). It participates in cofactor biosynthesis; adenosylcobalamin biosynthesis; cob(II)yrinate a,c-diamide from sirohydrochlorin (anaerobic route): step 10/10. In terms of biological role, catalyzes the ATP-dependent amidation of the two carboxylate groups at positions a and c of cobyrinate, using either L-glutamine or ammonia as the nitrogen source. The protein is Cobyrinate a,c-diamide synthase of Listeria monocytogenes serovar 1/2a (strain ATCC BAA-679 / EGD-e).